Here is a 1476-residue protein sequence, read N- to C-terminus: Glucosyltransferase-I (1476 aa).

Positions 1–34 (MDKKVRYKLRKVKKRWVTVSVASAVMTLTTLSGG) are cleaved as a signal peptide. Disordered regions lie at residues 42–89 (ESKS…ISSS) and 102–141 (PYTV…TEAD). Polar residues-rich tracts occupy residues 43 to 81 (SKSQ…QTNH) and 102 to 139 (PYTV…QTTE). Cell wall-binding repeat units lie at residues 159–178 (LPNV…NGKV) and 179–199 (RTNF…TGAY). The catalytic; approximate stretch occupies residues 200-1051 (TDTSIDTVNK…NTYFNISDNK (852 aa)). Cell wall-binding repeat units lie at residues 1087 to 1106 (KNTF…NGYM), 1107 to 1126 (VTGA…NGLQ), 1170 to 1189 (SVGL…MGYQ), 1214 to 1234 (RNRF…DGAA), 1235 to 1254 (VTGS…NGVQ), 1279 to 1299 (RNRF…NGYA), 1300 to 1319 (VTGA…NGVQ), 1344 to 1364 (RNRF…NGYA), 1365 to 1384 (VTGA…NGVQ), 1409 to 1429 (RNRF…NGYA), and 1430 to 1449 (VTGA…NGVQ).

This sequence belongs to the glycosyl hydrolase 70 family.

The protein resides in the secreted. The enzyme catalyses [(1-&gt;6)-alpha-D-glucosyl](n) + sucrose = [(1-&gt;6)-alpha-D-glucosyl](n+1) + D-fructose. In terms of biological role, production of extracellular glucans, that are thought to play a key role in the development of the dental plaque because of their ability to adhere to smooth surfaces and mediate the aggregation of bacterial cells and food debris. The polypeptide is Glucosyltransferase-I (gtfB) (Streptococcus mutans serotype c (strain ATCC 700610 / UA159)).